We begin with the raw amino-acid sequence, 531 residues long: Sop-2-related protein 3 (531 aa).

As to expression, expressed ubiquitously.

The protein resides in the cytoplasm. Its subcellular location is the nucleus. Functionally, probably acts synergistically with sop-2 to maintain the transcriptionally repressive state of homeotic genes in order to regulate various neurogenic identities. Specification of some neuronal identities also involves expression of non-Hox genes. Specifies dopaminergic and serotonergic neuronal cell fate, and regulates neurotransmitter choice and axon pathfinding. The sequence is that of Sop-2-related protein 3 (sor-3) from Caenorhabditis elegans.